We begin with the raw amino-acid sequence, 213 residues long: Adenylate kinase (213 aa).

Position 10–15 (10–15 (GSGKGT)) interacts with ATP. The segment at 30 to 59 (SVGDLLRNIISSESKLGKGIKDTVESGNLI) is NMP. AMP is bound by residues Arg36, 57–59 (NLI), 83–86 (GFPR), and Gln90. The LID stretch occupies residues 125 to 160 (DRLTCLDCKSIYSISSFKNTTCAKCKSTRLEKRIDD). Arg126 provides a ligand contact to ATP. Zn(2+) contacts are provided by Cys129 and Cys132. 135 to 136 (IY) lines the ATP pocket. Residues Cys146 and Cys149 each contribute to the Zn(2+) site. 2 residues coordinate AMP: Arg157 and Arg169. Leu195 provides a ligand contact to ATP.

This sequence belongs to the adenylate kinase family. Monomer.

The protein resides in the cytoplasm. The catalysed reaction is AMP + ATP = 2 ADP. It participates in purine metabolism; AMP biosynthesis via salvage pathway; AMP from ADP: step 1/1. In terms of biological role, catalyzes the reversible transfer of the terminal phosphate group between ATP and AMP. Plays an important role in cellular energy homeostasis and in adenine nucleotide metabolism. This is Adenylate kinase from Wolbachia pipientis subsp. Culex pipiens (strain wPip).